Here is a 662-residue protein sequence, read N- to C-terminus: UvrABC system protein B (662 aa).

The region spanning 25–411 is the Helicase ATP-binding domain; it reads DGIIAGDKFQ…STRIVEQVIR (387 aa). Position 38-45 (38-45) interacts with ATP; the sequence is GVTGSGKT. The short motif at 91–114 is the Beta-hairpin element; it reads YYDYYQPEAYVPARDLYIEKDASI. The 167-residue stretch at 428–594 folds into the Helicase C-terminal domain; it reads QMEHIYGEVK…TIKKAIEDIL (167 aa). The 36-residue stretch at 625-660 folds into the UVR domain; the sequence is KKLIKKLEAQMAEYADMLMFEEAAVIRDKIEEVKRI.

Belongs to the UvrB family. As to quaternary structure, forms a heterotetramer with UvrA during the search for lesions. Interacts with UvrC in an incision complex.

It is found in the cytoplasm. The UvrABC repair system catalyzes the recognition and processing of DNA lesions. A damage recognition complex composed of 2 UvrA and 2 UvrB subunits scans DNA for abnormalities. Upon binding of the UvrA(2)B(2) complex to a putative damaged site, the DNA wraps around one UvrB monomer. DNA wrap is dependent on ATP binding by UvrB and probably causes local melting of the DNA helix, facilitating insertion of UvrB beta-hairpin between the DNA strands. Then UvrB probes one DNA strand for the presence of a lesion. If a lesion is found the UvrA subunits dissociate and the UvrB-DNA preincision complex is formed. This complex is subsequently bound by UvrC and the second UvrB is released. If no lesion is found, the DNA wraps around the other UvrB subunit that will check the other stand for damage. In Treponema denticola (strain ATCC 35405 / DSM 14222 / CIP 103919 / JCM 8153 / KCTC 15104), this protein is UvrABC system protein B.